Consider the following 60-residue polypeptide: DNA-binding protein 7c (60 aa).

The segment at 37-60 (DNGKTGRGAVSEKDAPKELLEKLK) is disordered. Residues 46–60 (VSEKDAPKELLEKLK) are compositionally biased toward basic and acidic residues.

It belongs to the 7 kDa DNA-binding/endoribonuclease P2 family. In terms of assembly, monomer.

It localises to the cytoplasm. Can constrain negative DNA supercoils. May be involved in maintaining the integrity of the genome at high temperature. The chain is DNA-binding protein 7c from Acidianus hospitalis (strain W1).